Reading from the N-terminus, the 102-residue chain is Phosphoribosyl-ATP pyrophosphatase (102 aa).

It belongs to the PRA-PH family.

The protein resides in the cytoplasm. The enzyme catalyses 1-(5-phospho-beta-D-ribosyl)-ATP + H2O = 1-(5-phospho-beta-D-ribosyl)-5'-AMP + diphosphate + H(+). Its pathway is amino-acid biosynthesis; L-histidine biosynthesis; L-histidine from 5-phospho-alpha-D-ribose 1-diphosphate: step 2/9. The sequence is that of Phosphoribosyl-ATP pyrophosphatase from Ignicoccus hospitalis (strain KIN4/I / DSM 18386 / JCM 14125).